The following is a 446-amino-acid chain: Mannosyltransferase KTR6 (446 aa).

Topologically, residues Met1–Lys8 are cytoplasmic. Residues Ile9–His29 form a helical; Signal-anchor for type II membrane protein membrane-spanning segment. Residues Pro30–Gly114 are stem region. At Pro30–Pro446 the chain is on the lumenal side. 2 N-linked (GlcNAc...) asparagine glycosylation sites follow: Asn82 and Asn98. Residues Ser115 to Pro446 are catalytic. The active-site Nucleophile is Glu334.

The protein belongs to the glycosyltransferase 15 family.

The protein resides in the membrane. The protein operates within protein modification; protein glycosylation. In terms of biological role, glycosyltransferase that transfers an alpha-D-mannosyl residue from GDP-mannose into lipid-linked oligosaccharide, forming an alpha-(1-&gt;2)-D-mannosyl-D-mannose linkage. Required for addition of mannosylphosphate in yeast mannan. Recognizes any oligosaccharides with at least one alpha-1,2-linked mannobiose unit. This Saccharomyces cerevisiae (strain ATCC 204508 / S288c) (Baker's yeast) protein is Mannosyltransferase KTR6 (KTR6).